The chain runs to 294 residues: Homoserine kinase (294 aa).

ATP is bound at residue 84–94 (PFSRGLGSSSA).

The protein belongs to the GHMP kinase family. Homoserine kinase subfamily.

Its subcellular location is the cytoplasm. It catalyses the reaction L-homoserine + ATP = O-phospho-L-homoserine + ADP + H(+). Its pathway is amino-acid biosynthesis; L-threonine biosynthesis; L-threonine from L-aspartate: step 4/5. Functionally, catalyzes the ATP-dependent phosphorylation of L-homoserine to L-homoserine phosphate. This chain is Homoserine kinase, found in Campylobacter concisus (strain 13826).